A 608-amino-acid polypeptide reads, in one-letter code: Myosin light chain kinase 2, skeletal/cardiac muscle (608 aa).

The disordered stretch occupies residues 1–160 (MATENGAVEL…RGSPAFLHSP (160 aa)). Ala2 carries the N-acetylalanine modification. 2 stretches are compositionally biased toward basic and acidic residues: residues 31-43 (AAEK…DPEK) and 50-63 (TKQD…KKDA). Gly residues predominate over residues 82-91 (GSQGPAGEGG). The span at 116-127 (ASEKKPEAEKGP) shows a compositional bias: basic and acidic residues. A phosphoserine mark is found at Ser153, Ser159, and Ser161. Residues 214–235 (QKEAGEKAPGQADQAKVQGDTS) are disordered. Positions 297–552 (MNSKEALGGG…AAQCLAHPWL (256 aa)) constitute a Protein kinase domain. ATP is bound by residues 303-311 (LGGGKFGAV) and Lys326. The active-site Proton acceptor is Asp418. Residue Thr457 is modified to Phosphothreonine. A calmodulin-binding region spans residues 586 to 598 (IAVSAANRFKKIS).

The protein belongs to the protein kinase superfamily. CAMK Ser/Thr protein kinase family. In terms of assembly, may interact with centrin.

The protein localises to the cytoplasm. It catalyses the reaction L-seryl-[myosin light chain] + ATP = O-phospho-L-seryl-[myosin light chain] + ADP + H(+). It carries out the reaction L-threonyl-[myosin light chain] + ATP = O-phospho-L-threonyl-[myosin light chain] + ADP + H(+). Functionally, implicated in the level of global muscle contraction and cardiac function. Phosphorylates a specific serine in the N-terminus of a myosin light chain. This Oryctolagus cuniculus (Rabbit) protein is Myosin light chain kinase 2, skeletal/cardiac muscle (MYLK2).